The following is a 312-amino-acid chain: Olfactory receptor 51A7 (312 aa).

Over 1–25 the chain is Extracellular; it reads MSVLNNSEVKLFLLIGIPGLEHAHI. An N-linked (GlcNAc...) asparagine glycan is attached at asparagine 5. The chain crosses the membrane as a helical span at residues 26–46; that stretch reads WFSIPICLMYLLAIMGNCTIL. Topologically, residues 47 to 54 are cytoplasmic; it reads FIIKTEPS. A helical transmembrane segment spans residues 55 to 75; the sequence is LHEPMYYFLAMLAVSDMGLSL. Over 76–99 the chain is Extracellular; the sequence is SSLPTMLRVFLFNAMGISPNACFA. Cysteine 97 and cysteine 189 are oxidised to a cystine. The chain crosses the membrane as a helical span at residues 100 to 120; that stretch reads QEFFIHGFTVMESSVLLIMSL. The Cytoplasmic portion of the chain corresponds to 121-139; the sequence is DRFLAIHNPLRYSSILTSN. A helical transmembrane segment spans residues 140-160; that stretch reads RVAKMGLILAIRSILLVIPFP. At 161–196 the chain is on the extracellular side; that stretch reads FTLRRLKYCQKNLLSHSYCLHQDTMKLACSDNKTNV. Asparagine 192 is a glycosylation site (N-linked (GlcNAc...) asparagine). Residues 197 to 216 form a helical membrane-spanning segment; it reads IYGFFIALCTMLDLALIVLS. Topologically, residues 217–236 are cytoplasmic; it reads YVLILKTILSIASLAERLKA. Residues 237-257 traverse the membrane as a helical segment; it reads LNTCVSHICAVLTFYVPIITL. At 258–272 the chain is on the extracellular side; the sequence is AAMHHFAKHKSPLVV. A helical transmembrane segment spans residues 273 to 293; it reads ILIADMFLLVPPLMNPIVYCV. The Cytoplasmic segment spans residues 294–312; it reads KTRQIWEKILGKLLNVCGR.

The protein belongs to the G-protein coupled receptor 1 family.

It localises to the cell membrane. Functionally, odorant receptor. This Homo sapiens (Human) protein is Olfactory receptor 51A7 (OR51A7).